The following is a 95-amino-acid chain: Protein S100-A1 (95 aa).

2 EF-hand domains span residues 12-47 (IKVF…FLSA) and 49-84 (KDPM…LTVA). 7 residues coordinate Ca(2+): K27, E32, D62, N64, D66, E68, and E73.

The protein belongs to the S-100 family. Dimer of either two alpha chains, or two beta chains, or one alpha and one beta chain. Also forms heterodimers with S100P. Interacts with AGER. Interacts with CAPZA1. Interacts with FKBP4. Interacts with RYR1 and RYR2. Interacts with CACYBP in a calcium-dependent manner. Interacts with PPP5C (via TPR repeats); the interaction is calcium-dependent and modulates PPP5C activity. Interacts with ATP2A2 and PLN in a Ca(2+)-dependent manner. Interacts with mitochondrial F1-ATPase subunits ATP5F1A and ATP5F1B; these interactions increase F1-ATPase activity. Glutathionylated; glutathionylation increases affinity to calcium about 10-fold.

The protein resides in the cytoplasm. The protein localises to the sarcoplasmic reticulum. It is found in the mitochondrion. Small calcium binding protein that plays important roles in several biological processes such as Ca(2+) homeostasis, chondrocyte biology and cardiomyocyte regulation. In response to an increase in intracellular Ca(2+) levels, binds calcium which triggers conformational changes. These changes allow interactions with specific target proteins and modulate their activity. Regulates a network in cardiomyocytes controlling sarcoplasmic reticulum Ca(2+) cycling and mitochondrial function through interaction with the ryanodine receptors RYR1 and RYR2, sarcoplasmic reticulum Ca(2+)-ATPase/ATP2A2 and mitochondrial F1-ATPase. Facilitates diastolic Ca(2+) dissociation and myofilament mechanics in order to improve relaxation during diastole. In Misgurnus fossilis (Weatherfish), this protein is Protein S100-A1 (s100a1).